The chain runs to 230 residues: Antiholin-like protein LrgB (230 aa).

8 helical membrane passes run 5 to 25 (MTPY…TLLF), 30 to 50 (GFFL…FLKV), 61 to 81 (GGKM…IPLY), 92 to 112 (WQIL…VYIV), 126 to 146 (MLPQ…IGGI), 149 to 169 (ITSF…ALFL), 177 to 197 (PIAK…AVGI), and 209 to 229 (IAVT…MPFI).

Belongs to the CidB/LrgB family. LrgB subfamily.

The protein resides in the cell membrane. Its function is as follows. Inhibits the expression or activity of extracellular murein hydrolases by interacting, possibly with LrgA, with the holin-like protein CidA. The LrgAB and CidA proteins may affect the proton motive force of the membrane. May be involved in programmed cell death (PCD), possibly triggering PCD in response to antibiotics and environmental stresses. This Bacillus mycoides (strain KBAB4) (Bacillus weihenstephanensis) protein is Antiholin-like protein LrgB.